Consider the following 628-residue polypeptide: 1-deoxy-D-xylulose-5-phosphate synthase (628 aa).

Thiamine diphosphate-binding positions include H77 and 118 to 120 (GHS). D150 contributes to the Mg(2+) binding site. Thiamine diphosphate is bound by residues 151-152 (GA), N180, Y288, and E369. Mg(2+) is bound at residue N180.

Belongs to the transketolase family. DXPS subfamily. Homodimer. Requires Mg(2+) as cofactor. Thiamine diphosphate is required as a cofactor.

The enzyme catalyses D-glyceraldehyde 3-phosphate + pyruvate + H(+) = 1-deoxy-D-xylulose 5-phosphate + CO2. Its pathway is metabolic intermediate biosynthesis; 1-deoxy-D-xylulose 5-phosphate biosynthesis; 1-deoxy-D-xylulose 5-phosphate from D-glyceraldehyde 3-phosphate and pyruvate: step 1/1. Functionally, catalyzes the acyloin condensation reaction between C atoms 2 and 3 of pyruvate and glyceraldehyde 3-phosphate to yield 1-deoxy-D-xylulose-5-phosphate (DXP). This is 1-deoxy-D-xylulose-5-phosphate synthase from Aquifex aeolicus (strain VF5).